The sequence spans 182 residues: Alkyl hydroperoxide reductase AhpD (182 aa).

Cysteine 132 acts as the Proton donor in catalysis. The cysteines at positions 132 and 135 are disulfide-linked. Cysteine 135 (cysteine sulfenic acid (-SOH) intermediate) is an active-site residue.

Belongs to the AhpD family.

The catalysed reaction is N(6)-[(R)-dihydrolipoyl]-L-lysyl-[lipoyl-carrier protein] + a hydroperoxide = N(6)-[(R)-lipoyl]-L-lysyl-[lipoyl-carrier protein] + an alcohol + H2O. Functionally, antioxidant protein with alkyl hydroperoxidase activity. Required for the reduction of the AhpC active site cysteine residues and for the regeneration of the AhpC enzyme activity. This chain is Alkyl hydroperoxide reductase AhpD, found in Bradyrhizobium diazoefficiens (strain JCM 10833 / BCRC 13528 / IAM 13628 / NBRC 14792 / USDA 110).